Consider the following 228-residue polypeptide: Protein GrpE (228 aa).

The span at 1–22 (MDDKQKTNEEVKASSFDSEKSS) shows a compositional bias: basic and acidic residues. Positions 1–71 (MDDKQKTNEE…DQTNTNNNEL (71 aa)) are disordered. Residues 38-53 (QNVQHDNGSNPAQKQN) are compositionally biased toward polar residues.

It belongs to the GrpE family. In terms of assembly, homodimer.

The protein resides in the cytoplasm. Functionally, participates actively in the response to hyperosmotic and heat shock by preventing the aggregation of stress-denatured proteins, in association with DnaK and GrpE. It is the nucleotide exchange factor for DnaK and may function as a thermosensor. Unfolded proteins bind initially to DnaJ; upon interaction with the DnaJ-bound protein, DnaK hydrolyzes its bound ATP, resulting in the formation of a stable complex. GrpE releases ADP from DnaK; ATP binding to DnaK triggers the release of the substrate protein, thus completing the reaction cycle. Several rounds of ATP-dependent interactions between DnaJ, DnaK and GrpE are required for fully efficient folding. This is Protein GrpE from Coprothermobacter proteolyticus (strain ATCC 35245 / DSM 5265 / OCM 4 / BT).